The primary structure comprises 65 residues: Precursor peptide TigB (65 aa).

TIGSVS motif repeat units follow at residues 16–21, 23–28, 33–38, 40–45, 47–52, and 54–59; these read TIGSVS. A methylcyclopropylglycine mark is found at I17, I24, I34, I41, I48, and I55.

Post-translationally, is subject to maturation by TigE, that catalyzes the formation of methylcyclopropylglycine (mCPG) residues from isoleucine residues residing in the repeating TIGSVS motifs.

Functionally, precursor peptide which undergoes post-translational modifications by tailoring enzymes, leading to the mature natural product. The protein is Precursor peptide TigB of Paramaledivibacter caminithermalis (strain DSM 15212 / CIP 107654 / DViRD3) (Clostridium caminithermale).